The sequence spans 226 residues: Cytidylate kinase (226 aa).

Residue 10-18 coordinates ATP; the sequence is GPASSGKST.

It belongs to the cytidylate kinase family. Type 1 subfamily.

It localises to the cytoplasm. It catalyses the reaction CMP + ATP = CDP + ADP. It carries out the reaction dCMP + ATP = dCDP + ADP. The polypeptide is Cytidylate kinase (Streptococcus uberis (strain ATCC BAA-854 / 0140J)).